Consider the following 673-residue polypeptide: Inactive polyglycylase TTLL10 (673 aa).

The segment at 1-132 is disordered; the sequence is MDHSCTRFIH…ADSDDTNAAG (132 aa). Over residues 8 to 36 the composition is skewed to basic residues; sequence FIHRRGPPTRTRAGFKRGKRPRIQQRPRA. The span at 52–62 shows a compositional bias: pro residues; the sequence is ASQPGPCPAPG. A compositionally biased stretch (basic and acidic residues) spans 89-105; that stretch reads PDHDADGHCGPDLEGAE. The region spanning 155 to 552 is the TTL domain; that stretch reads PGPFFYIGGS…TFRKSLRGQK (398 aa). ATP is bound by residues 362–365, Lys375, and Asp377; that span reads QRYI. The disordered stretch occupies residues 569–673; that stretch reads EADPRPHLGG…EREEPENARP (105 aa). Residues 612–627 show a composition bias toward pro residues; the sequence is PAPPPLVPQRPRPPGP. Positions 661 to 673 are enriched in basic and acidic residues; it reads AKEEREEPENARP.

In terms of biological role, inactive polyglycylase. This chain is Inactive polyglycylase TTLL10, found in Homo sapiens (Human).